Consider the following 250-residue polypeptide: Pre-protein VI (250 aa).

Positions 1–33 are excised as a propeptide; it reads MEDINFASLAPRHGSRPFMGNWQDIGTSNMSGG. The segment at 34-54 is amphipathic alpha-helix essential for membrane lytic activity; the sequence is AFSWGSLWSGIKNFGSTVKNY. Positions 36 to 53 are involved in endosomal membrane lysis; sequence SWGSLWSGIKNFGSTVKN. The segment at 48-74 is interaction with hexon protein; sequence GSTVKNYGSKAWNSSTGQMLRDKLKEQ. The Nuclear export signal signature appears at 67–76; the sequence is LRDKLKEQNF. A disordered region spans residues 103-148; sequence INSKLDPRPPVEEPPPAVETVSPEGRGEKRPRPDREETLVTQIDEP. At S124 the chain carries Phosphoserine; by host. Residues 127–140 show a composition bias toward basic and acidic residues; that stretch reads GRGEKRPRPDREET. The Nuclear localization signal motif lies at 131–135; that stretch reads KRPRP. T143 is modified (phosphothreonine; by host). The short motif at 148-151 is the PPXY motif element; that stretch reads PPSY. The short motif at 231–242 is the Nuclear export signal element; sequence STLNSIVGLGVQ. The interaction with hexon protein stretch occupies residues 233–239; it reads LNSIVGL. Positions 240 to 250 are binds to importin alpha/beta, involved in hexon nuclear import; that stretch reads GVQSLKRRRCF. The Nuclear localization signal motif lies at 245–248; the sequence is KRRR.

Belongs to the adenoviridae protein VI family. Interacts with hexon protein; this interaction allows nuclear import of hexon trimers and possibly pre-capsid assembly. Interacts (via C-terminal NLS) with importin alpha/beta. In terms of assembly, interacts (via PPxY motif) with host NEDD4 ubiquitine ligase; this interaction might play a role in virus intracellular transport during entry. Part of a complex composed of the core-capsid bridging protein, the endosome lysis protein VI and the hexon-linking protein VIII; these interactions bridge the virus core to the capsid. Interacts with peripentonal hexons; this interaction stabilizes the capsid by gluing two peripentonal hexons together and joining them with an adjacent group-of-nine hexon. As to quaternary structure, heterodimer with the viral protease; disulfide-linked. Interacts with the viral protease. In terms of processing, ubiquitinated by Nedd4 following partial capsid disassembly; which might play a role in intracellular virus movement during entry. Post-translationally, contains the major nuclear import and export signals. Proteolytically removed during virion maturation. The processing of the C-terminus turns the precursor into a mature viral structural protein and abrogates its ability to promote hexon import and act as a potential chaperone protein.

The protein resides in the host nucleus. Its subcellular location is the host cytoplasm. It localises to the virion. In terms of biological role, during virus assembly, promotes hexon trimers nuclear import through nuclear pore complexes via an importin alpha/beta-dependent mechanism. By analogy to herpesviruses capsid assembly, might act as a chaperone to promote the formation of the icosahedral capsid. Its function is as follows. Structural component of the virion that provides increased stability to the particle shell through its interaction with the core-capsid bridging protein and the hexon-linking protein VIII. Fibers shedding during virus entry into host cell allows the endosome lysis protein to be exposed as a membrane-lytic peptide. Exhibits pH-independent membrane fragmentation activity and probably mediates viral rapid escape from host endosome via organellar membrane lysis. It is not clear if it then remains partially associated with the capsid and involved in the intracellular microtubule-dependent transport of capsid to the nucleus, or if it is lost during endosomal penetration. Functionally, cofactor that activates the viral protease. Binds to viral protease in a 1:1 ratio. The sequence is that of Pre-protein VI from Homo sapiens (Human).